The following is a 443-amino-acid chain: Trigger factor (443 aa).

The region spanning 161 to 246 is the PPIase FKBP-type domain; the sequence is GDKVVIDFQG…IKKIMEGKLP (86 aa).

It belongs to the FKBP-type PPIase family. Tig subfamily.

It localises to the cytoplasm. It carries out the reaction [protein]-peptidylproline (omega=180) = [protein]-peptidylproline (omega=0). Its function is as follows. Involved in protein export. Acts as a chaperone by maintaining the newly synthesized protein in an open conformation. Functions as a peptidyl-prolyl cis-trans isomerase. In Legionella pneumophila (strain Lens), this protein is Trigger factor.